The sequence spans 112 residues: UPF0102 protein C8J_0145 (112 aa).

The protein belongs to the UPF0102 family.

The chain is UPF0102 protein C8J_0145 from Campylobacter jejuni subsp. jejuni serotype O:6 (strain 81116 / NCTC 11828).